A 418-amino-acid polypeptide reads, in one-letter code: Tyrosine--tRNA ligase (418 aa).

Tyrosine 39 provides a ligand contact to L-tyrosine. The short motif at 44–53 (CTADSLHVGS) is the 'HIGH' region element. L-tyrosine is bound by residues tyrosine 176 and glutamine 180. Positions 236–240 (KMGKT) match the 'KMSKS' region motif. Lysine 239 is a binding site for ATP. The S4 RNA-binding domain occupies 350–416 (LPLAEMMRAT…KKRHALIRVL (67 aa)).

Belongs to the class-I aminoacyl-tRNA synthetase family. TyrS type 1 subfamily. In terms of assembly, homodimer.

The protein resides in the cytoplasm. The catalysed reaction is tRNA(Tyr) + L-tyrosine + ATP = L-tyrosyl-tRNA(Tyr) + AMP + diphosphate + H(+). In terms of biological role, catalyzes the attachment of tyrosine to tRNA(Tyr) in a two-step reaction: tyrosine is first activated by ATP to form Tyr-AMP and then transferred to the acceptor end of tRNA(Tyr). This is Tyrosine--tRNA ligase from Rhodospirillum rubrum (strain ATCC 11170 / ATH 1.1.1 / DSM 467 / LMG 4362 / NCIMB 8255 / S1).